The following is a 1149-amino-acid chain: Golgi apparatus protein 1 homolog (1149 aa).

Positions 1-19 are cleaved as a signal peptide; sequence MWRFPLILASVCWLTTAQQ. Residues 20 to 1115 are Extracellular-facing; it reads QNVANDPDKK…NLVMEHPERN (1096 aa). Cys-rich GLG1 repeat units follow at residues 24–69, 71–135, 139–207, 216–276, 277–344, 349–411, 415–475, 477–549, 551–610, 613–676, 677–736, 743–803, 809–867, 868–938, 945–1009, and 1010–1070; these read NDPD…FSET, TLSE…KNVT, KCHA…VKNA, ILGD…NDKF, MDPE…NQPE, QPSK…ESRN, KLGA…NVDS, DMVP…YDEQ, PLSV…ETDN, RKHP…DAKE, MNNK…FEHK, DLTD…IECL, HLGP…IVRL, LQRE…RQSI, DFSP…NKGL, and IRDK…DKQE. Asn-133 carries an N-linked (GlcNAc...) asparagine glycan. An N-linked (GlcNAc...) asparagine glycan is attached at Asn-411. The helical transmembrane segment at 1116–1136 threads the bilayer; sequence SILGYLAGFIVFILLIGCCCG. Residues 1137-1149 lie on the Cytoplasmic side of the membrane; sequence RVSKKQYIEMKNR.

The protein resides in the membrane. This Caenorhabditis elegans protein is Golgi apparatus protein 1 homolog.